The following is a 149-amino-acid chain: Envelope glycoprotein UL4 (149 aa).

A signal peptide spans 1–18 (MMLRTWISLPMVLLDAYC). 9 N-linked (GlcNAc...) asparagine; by host glycosylation sites follow: Asn46, Asn51, Asn59, Asn67, Asn105, Asn109, Asn119, Asn136, and Asn145.

Belongs to the RL11 family. N-glycosylated and possibly O-glycosylated.

It is found in the virion membrane. The sequence is that of Envelope glycoprotein UL4 (UL4) from Human cytomegalovirus (strain Merlin) (HHV-5).